The chain runs to 572 residues: Probable pyruvate decarboxylase C186.09 (572 aa).

Substrate contacts are provided by D38 and H125. Positions 400-482 are thiamine pyrophosphate binding; that stretch reads DSWFGGMRIT…FLINNRGYTI (83 aa). Mg(2+)-binding residues include D450, N477, and G479. E483 serves as a coordination point for substrate.

Belongs to the TPP enzyme family. As to quaternary structure, homotetramer. A metal cation is required as a cofactor. The cofactor is thiamine diphosphate.

The enzyme catalyses a 2-oxocarboxylate + H(+) = an aldehyde + CO2. The protein is Probable pyruvate decarboxylase C186.09 of Schizosaccharomyces pombe (strain 972 / ATCC 24843) (Fission yeast).